The chain runs to 282 residues: Inositol oxygenase (282 aa).

The tract at residues 1-25 is disordered; the sequence is MKDPDPSQVYRPDMDPEAAKDKGSF. Residues 12–24 are compositionally biased toward basic and acidic residues; the sequence is PDMDPEAAKDKGS. Arg-26 is a substrate binding site. Phosphoserine is present on Ser-30. 82 to 84 provides a ligand contact to substrate; sequence DES. 3 residues coordinate Fe cation: His-95, His-120, and Asp-121. Substrate is bound by residues Lys-124 and 138 to 139; that span reads GD. His-191, His-217, and Asp-250 together coordinate Fe cation. 217 to 218 is a substrate binding site; the sequence is HS.

The protein belongs to the myo-inositol oxygenase family. Fe cation serves as cofactor. Post-translationally, the N-terminus is blocked. Kidney specific.

Its subcellular location is the cytoplasm. The enzyme catalyses myo-inositol + O2 = D-glucuronate + H2O + H(+). The protein operates within polyol metabolism; myo-inositol degradation into D-glucuronate; D-glucuronate from myo-inositol: step 1/1. The sequence is that of Inositol oxygenase (MIOX) from Sus scrofa (Pig).